Here is a 313-residue protein sequence, read N- to C-terminus: 2,3-dihydroxyphenylpropionate/2,3-dihydroxicinnamic acid 1,2-dioxygenase (313 aa).

The Proton donor role is filled by histidine 115. The active-site Proton acceptor is histidine 179.

This sequence belongs to the LigB/MhpB extradiol dioxygenase family. Homotetramer. Requires Fe(2+) as cofactor.

It carries out the reaction 3-(2,3-dihydroxyphenyl)propanoate + O2 = (2Z,4E)-2-hydroxy-6-oxonona-2,4-dienedioate + H(+). The enzyme catalyses (2E)-3-(2,3-dihydroxyphenyl)prop-2-enoate + O2 = (2Z,4E,7E)-2-hydroxy-6-oxonona-2,4,7-trienedioate + H(+). It participates in aromatic compound metabolism; 3-phenylpropanoate degradation. Its function is as follows. Catalyzes the non-heme iron(II)-dependent oxidative cleavage of 2,3-dihydroxyphenylpropionic acid and 2,3-dihydroxicinnamic acid into 2-hydroxy-6-ketononadienedioate and 2-hydroxy-6-ketononatrienedioate, respectively. The polypeptide is 2,3-dihydroxyphenylpropionate/2,3-dihydroxicinnamic acid 1,2-dioxygenase (Xanthobacter autotrophicus (strain ATCC BAA-1158 / Py2)).